The chain runs to 206 residues: Large ribosomal subunit protein mL62 (206 aa).

Residues 1 to 29 (MAATRCLRWGLSRAGVWLLPPPARCPRRA) constitute a mitochondrion transit peptide. At Gln-90 the chain carries N5-methylglutamine.

The protein belongs to the prokaryotic/mitochondrial release factor family. Mitochondrion-specific ribosomal protein mL62 subfamily. In terms of assembly, component of the mitochondrial large ribosomal subunit (mt-LSU). Mature mammalian 55S mitochondrial ribosomes consist of a small (28S) and a large (39S) subunit. The 28S small subunit contains a 12S ribosomal RNA (12S mt-rRNA) and 30 different proteins. The 39S large subunit contains a 16S rRNA (16S mt-rRNA), a copy of mitochondrial valine transfer RNA (mt-tRNA(Val)), which plays an integral structural role, and 52 different proteins. In terms of processing, methylation of glutamine in the GGQ triplet by HEMK1. As to expression, down-regulated during the in vitro differentiation of HT29-D4 colon carcinoma cells.

It is found in the mitochondrion. The enzyme catalyses an N-acyl-L-alpha-aminoacyl-tRNA + H2O = an N-acyl-L-amino acid + a tRNA + H(+). Its function is as follows. Essential peptidyl-tRNA hydrolase component of the mitochondrial large ribosomal subunit. Acts as a codon-independent translation release factor that has lost all stop codon specificity and directs the termination of translation in mitochondrion, possibly in case of abortive elongation. Involved in the hydrolysis of peptidyl-tRNAs that have been prematurely terminated and thus in the recycling of stalled mitochondrial ribosomes. The chain is Large ribosomal subunit protein mL62 from Homo sapiens (Human).